We begin with the raw amino-acid sequence, 390 residues long: Tuftelin (390 aa).

Coiled coils occupy residues 88–126 and 163–352; these read DKMTHEKNIDQLKSEVQYIQEARNCLQKLREDISSKLDR and PSMS…EKQV. The interval 356–383 is disordered; that stretch reads NFSTQARAKTENLGSVRISKPPSPKPMP.

Belongs to the tuftelin family. Interacts with TFIP11. May form oligomers. As to expression, ameloblasts, and also non-odontogenic tissues including kidney, lung, liver and testis.

The protein localises to the secreted. Involved in the structural organization of the epidermis. Involved in the mineralization and structural organization of enamel. The chain is Tuftelin (Tuft1) from Mus musculus (Mouse).